A 599-amino-acid polypeptide reads, in one-letter code: uncharacterized protein (599 aa).

Residue 49-56 (GPPGSGKT) participates in ATP binding. Positions 416–599 (AEVRKELEYK…TKIFEEKFSV (184 aa)) constitute a Macro domain.

This sequence in the N-terminal section; belongs to the AAA ATPase family. RarA/MGS1/WRNIP1 subfamily.

This is an uncharacterized protein from Thermotoga maritima (strain ATCC 43589 / DSM 3109 / JCM 10099 / NBRC 100826 / MSB8).